A 428-amino-acid chain; its full sequence is Flotillin-1 (428 aa).

Phosphoserine occurs at positions 19, 163, and 385. At T387 the chain carries Phosphothreonine.

Belongs to the band 7/mec-2 family. Flotillin subfamily. In terms of assembly, heterooligomeric complex of flotillin-1 and flotillin-2 and caveolin-1 and caveolin-2. Interacts with ECPAS. As to expression, high expression in brain, white adipose tissue, heart muscle, skeletal muscle and lung. Low expression in spleen, liver and testis.

It is found in the cell membrane. Its subcellular location is the endosome. The protein resides in the membrane. It localises to the caveola. The protein localises to the melanosome. It is found in the membrane raft. In terms of biological role, may act as a scaffolding protein within caveolar membranes, functionally participating in formation of caveolae or caveolae-like vesicles. The sequence is that of Flotillin-1 (Flot1) from Mus musculus (Mouse).